A 102-amino-acid chain; its full sequence is Large ribosomal subunit protein mL63 (102 aa).

This sequence belongs to the mitochondrion-specific ribosomal protein mL63 family.

Its subcellular location is the mitochondrion. This Bos taurus (Bovine) protein is Large ribosomal subunit protein mL63 (MRPL57).